The chain runs to 368 residues: Agmatine deiminase (368 aa).

Cys-357 acts as the Amidino-cysteine intermediate in catalysis.

This sequence belongs to the agmatine deiminase family. As to quaternary structure, homodimer.

It carries out the reaction agmatine + H2O = N-carbamoylputrescine + NH4(+). The protein operates within amine and polyamine biosynthesis; putrescine biosynthesis via agmatine pathway; N-carbamoylputrescine from agmatine: step 1/1. In terms of biological role, mediates the hydrolysis of agmatine into N-carbamoylputrescine in the arginine decarboxylase (ADC) pathway of putrescine biosynthesis, a basic polyamine. The sequence is that of Agmatine deiminase from Pseudomonas aeruginosa (strain LESB58).